The following is an 880-amino-acid chain: Leucine--tRNA ligase (880 aa).

The 'HIGH' region motif lies at 46-56 (PYPSGALHMGH). A 'KMSKS' region motif is present at residues 638 to 642 (KMSKS). Lys-641 contacts ATP.

It belongs to the class-I aminoacyl-tRNA synthetase family.

The protein localises to the cytoplasm. The catalysed reaction is tRNA(Leu) + L-leucine + ATP = L-leucyl-tRNA(Leu) + AMP + diphosphate. The polypeptide is Leucine--tRNA ligase (Xanthomonas axonopodis pv. citri (strain 306)).